Here is a 522-residue protein sequence, read N- to C-terminus: MSITSDEVNFLVYRYLQESGFSHSAFTFGIESHISQSNINGTLVPPSALISILQKGLQYVEAEISINKDGTVFDSRPIESLSLIVAVIPDVVQMRQQAFGEKLTQQQASAAATEASAMAKAATMTPAAISQQNPPKNREATVNGEENGAHEINNHSKPMEIDGDVEIPPNKATVLRGHESEVFICAWNPVSDLLASGSGDSTARIWNLNENSNGGSTQLVLRHCIREGGHDVPSNKDVTSLDWNSDGTLLAMGSYDGFARIWTENGNLASTLGQHKGPIFALKWNKKGNYVLSAGVDKTTIIWDAHTGEAKQQFPFHSAPALDVDWQNNMTFASCSTDMCIHVCRLGCDHPVKTFQGHTNEVNAIKWDPSGMLLASCSDDMTLKIWSMKQDACVHDLQAHSKEIYTIKWSPTGPATSNPNSSIMLASASFDSTVRLWDVEQGVCTHTLMKHQEPVYSVAFSPDGKYLASGSFDKYVHIWNTQSGSLVHSYQGTGGIFEVCWNARGDKVGASASDGSVCVLDL.

At Ser-2 the chain carries N-acetylserine. One can recognise a LisH domain in the interval 4–36; that stretch reads TSDEVNFLVYRYLQESGFSHSAFTFGIESHISQ. The F-box-like domain occupies 41-86; the sequence is GTLVPPSALISILQKGLQYVEAEISINKDGTVFDSRPIESLSLIVA. Residue Lys-102 is modified to N6-acetyllysine. A Phosphoserine modification is found at Ser-130. 8 WD repeats span residues 177–216, 233–272, 274–313, 316–354, 357–396, 399–447, 450–489, and 491–521; these read GHES…NGGS, PSNK…ASTL, QHKG…AKQQ, FHSA…PVKT, GHTN…CVHD, AHSK…CTHT, KHQE…LVHS, and QGTG…CVLD. A Glycyl lysine isopeptide (Lys-Gly) (interchain with G-Cter in SUMO2) cross-link involves residue Lys-287.

The protein belongs to the WD repeat EBI family. In terms of assembly, probable component of the N-Cor repressor complex and some E3 ubiquitin ligase complex. Interacts with NCOR2. Fetal brain and prostate. Expressed in the cochlear spiral ganglion neurons, and in outer and inner hair cells.

It is found in the nucleus. Functionally, F-box-like protein involved in the recruitment of the ubiquitin/19S proteasome complex to nuclear receptor-regulated transcription units. Plays an essential role in transcription activation mediated by nuclear receptors. Probably acts as integral component of corepressor complexes that mediates the recruitment of the 19S proteasome complex, leading to the subsequent proteasomal degradation of transcription repressor complexes, thereby allowing cofactor exchange. The sequence is that of F-box-like/WD repeat-containing protein TBL1Y (TBL1Y) from Homo sapiens (Human).